We begin with the raw amino-acid sequence, 453 residues long: Iron-sulfur cluster assembly SufBD family protein slr0076 (453 aa).

This sequence belongs to the iron-sulfur cluster assembly SufBD family.

The sequence is that of Iron-sulfur cluster assembly SufBD family protein slr0076 from Synechocystis sp. (strain ATCC 27184 / PCC 6803 / Kazusa).